The chain runs to 593 residues: Scarecrow-like protein 1 (593 aa).

2 disordered regions span residues N29–T61 and Y188–V216. Polar residues predominate over residues L35–Q48. Residues S202–V211 show a composition bias toward low complexity. The GRAS domain maps to S213 to R593. A leucine repeat I (LRI) region spans residues A220–F280. The interval M299–G364 is VHIID. A VHIID motif is present at residues V330 to D334. Residues I380 to S411 are leucine repeat II (LRII). The interval L421–N515 is PFYRE. The interval A518 to R593 is SAW.

This sequence belongs to the GRAS family. As to expression, expressed in seedlings, roots, shoots, leaves, flowers and siliques.

It localises to the nucleus. Functionally, probable transcription factor involved in plant development. The chain is Scarecrow-like protein 1 (SCL1) from Arabidopsis thaliana (Mouse-ear cress).